Consider the following 260-residue polypeptide: 4-hydroxy-tetrahydrodipicolinate reductase (260 aa).

12-17 (GFRGKM) lines the NAD(+) pocket. NADP(+) is bound at residue Lys40. Residues 92 to 94 (GTT) and 118 to 121 (APNF) contribute to the NAD(+) site. The Proton donor/acceptor role is filled by His148. Residue His149 coordinates (S)-2,3,4,5-tetrahydrodipicolinate. Lys152 acts as the Proton donor in catalysis. 158-159 (GT) contacts (S)-2,3,4,5-tetrahydrodipicolinate.

Belongs to the DapB family.

It localises to the cytoplasm. The catalysed reaction is (S)-2,3,4,5-tetrahydrodipicolinate + NAD(+) + H2O = (2S,4S)-4-hydroxy-2,3,4,5-tetrahydrodipicolinate + NADH + H(+). It carries out the reaction (S)-2,3,4,5-tetrahydrodipicolinate + NADP(+) + H2O = (2S,4S)-4-hydroxy-2,3,4,5-tetrahydrodipicolinate + NADPH + H(+). The protein operates within amino-acid biosynthesis; L-lysine biosynthesis via DAP pathway; (S)-tetrahydrodipicolinate from L-aspartate: step 4/4. In terms of biological role, catalyzes the conversion of 4-hydroxy-tetrahydrodipicolinate (HTPA) to tetrahydrodipicolinate. The chain is 4-hydroxy-tetrahydrodipicolinate reductase from Lactococcus lactis subsp. lactis (strain IL1403) (Streptococcus lactis).